The sequence spans 299 residues: Ciliary microtubule inner protein 2B (299 aa).

The protein belongs to the CIMIP2 family. As to expression, expressed in airway epithelial cells.

Its subcellular location is the cytoplasm. The protein localises to the cytoskeleton. The protein resides in the cilium axoneme. Functionally, microtubule inner protein (MIP) part of the dynein-decorated doublet microtubules (DMTs) in cilia axoneme, which is required for motile cilia beating. This Danio rerio (Zebrafish) protein is Ciliary microtubule inner protein 2B (cimip2b).